Reading from the N-terminus, the 298-residue chain is Ribosomal protein L11 methyltransferase (298 aa).

Thr139, Gly163, Asp185, and Asn232 together coordinate S-adenosyl-L-methionine.

Belongs to the methyltransferase superfamily. PrmA family.

The protein localises to the cytoplasm. It carries out the reaction L-lysyl-[protein] + 3 S-adenosyl-L-methionine = N(6),N(6),N(6)-trimethyl-L-lysyl-[protein] + 3 S-adenosyl-L-homocysteine + 3 H(+). Methylates ribosomal protein L11. This is Ribosomal protein L11 methyltransferase from Microcystis aeruginosa (strain NIES-843 / IAM M-2473).